Reading from the N-terminus, the 136-residue chain is MRHGVKTSKLQRNASHRRALLANQACSLILNGRITTTLAKAKALRPYVEKLITLAKRGDVHSRRLATATIHNTTAVKRLFDEIAPLCAERKGGYTRIVKLGQRLTDSALVAMIEIIDLPREAAEKEEAPATTEATA.

This sequence belongs to the bacterial ribosomal protein bL17 family. In terms of assembly, part of the 50S ribosomal subunit. Contacts protein L32.

This is Large ribosomal subunit protein bL17 from Akkermansia muciniphila (strain ATCC BAA-835 / DSM 22959 / JCM 33894 / BCRC 81048 / CCUG 64013 / CIP 107961 / Muc).